Here is a 186-residue protein sequence, read N- to C-terminus: Cell division protein SepF (186 aa).

A disordered region spans residues 24–91 (EDEEEEERYA…HNPPHLRAVP (68 aa)).

It belongs to the SepF family. Homodimer. Interacts with FtsZ.

It localises to the cytoplasm. In terms of biological role, cell division protein that is part of the divisome complex and is recruited early to the Z-ring. Probably stimulates Z-ring formation, perhaps through the cross-linking of FtsZ protofilaments. Its function overlaps with FtsA. This is Cell division protein SepF from Rubrobacter xylanophilus (strain DSM 9941 / JCM 11954 / NBRC 16129 / PRD-1).